Consider the following 384-residue polypeptide: tRNA-specific 2-thiouridylase MnmA (384 aa).

Residues 9-16 (GMSGGVDS) and Met35 each bind ATP. Residues 95-97 (NPD) are interaction with target base in tRNA. Cys100 serves as the catalytic Nucleophile. A disulfide bond links Cys100 and Cys196. Gly124 is a binding site for ATP. The tract at residues 146 to 148 (KDQ) is interaction with tRNA. Residue Cys196 is the Cysteine persulfide intermediate of the active site. The interaction with tRNA stretch occupies residues 308–309 (RY).

This sequence belongs to the MnmA/TRMU family.

It is found in the cytoplasm. The catalysed reaction is S-sulfanyl-L-cysteinyl-[protein] + uridine(34) in tRNA + AH2 + ATP = 2-thiouridine(34) in tRNA + L-cysteinyl-[protein] + A + AMP + diphosphate + H(+). Functionally, catalyzes the 2-thiolation of uridine at the wobble position (U34) of tRNA, leading to the formation of s(2)U34. This is tRNA-specific 2-thiouridylase MnmA from Burkholderia ambifaria (strain ATCC BAA-244 / DSM 16087 / CCUG 44356 / LMG 19182 / AMMD) (Burkholderia cepacia (strain AMMD)).